The primary structure comprises 279 residues: 4-hydroxy-3-methylbut-2-enyl diphosphate reductase (279 aa).

Residue C12 participates in [4Fe-4S] cluster binding. (2E)-4-hydroxy-3-methylbut-2-enyl diphosphate-binding residues include H36 and H70. Residues H36 and H70 each coordinate dimethylallyl diphosphate. Residues H36 and H70 each contribute to the isopentenyl diphosphate site. [4Fe-4S] cluster is bound at residue C92. Position 120 (H120) interacts with (2E)-4-hydroxy-3-methylbut-2-enyl diphosphate. Residue H120 coordinates dimethylallyl diphosphate. H120 contacts isopentenyl diphosphate. The active-site Proton donor is the E122. T158 contributes to the (2E)-4-hydroxy-3-methylbut-2-enyl diphosphate binding site. C186 is a [4Fe-4S] cluster binding site. Positions 214, 215, 216, and 258 each coordinate (2E)-4-hydroxy-3-methylbut-2-enyl diphosphate. Positions 214, 215, 216, and 258 each coordinate dimethylallyl diphosphate. Isopentenyl diphosphate contacts are provided by S214, S215, N216, and S258.

The protein belongs to the IspH family. [4Fe-4S] cluster serves as cofactor.

It catalyses the reaction isopentenyl diphosphate + 2 oxidized [2Fe-2S]-[ferredoxin] + H2O = (2E)-4-hydroxy-3-methylbut-2-enyl diphosphate + 2 reduced [2Fe-2S]-[ferredoxin] + 2 H(+). The catalysed reaction is dimethylallyl diphosphate + 2 oxidized [2Fe-2S]-[ferredoxin] + H2O = (2E)-4-hydroxy-3-methylbut-2-enyl diphosphate + 2 reduced [2Fe-2S]-[ferredoxin] + 2 H(+). It participates in isoprenoid biosynthesis; dimethylallyl diphosphate biosynthesis; dimethylallyl diphosphate from (2E)-4-hydroxy-3-methylbutenyl diphosphate: step 1/1. Its pathway is isoprenoid biosynthesis; isopentenyl diphosphate biosynthesis via DXP pathway; isopentenyl diphosphate from 1-deoxy-D-xylulose 5-phosphate: step 6/6. Its function is as follows. Catalyzes the conversion of 1-hydroxy-2-methyl-2-(E)-butenyl 4-diphosphate (HMBPP) into a mixture of isopentenyl diphosphate (IPP) and dimethylallyl diphosphate (DMAPP). Acts in the terminal step of the DOXP/MEP pathway for isoprenoid precursor biosynthesis. This is 4-hydroxy-3-methylbut-2-enyl diphosphate reductase from Campylobacter fetus subsp. fetus (strain 82-40).